Here is a 360-residue protein sequence, read N- to C-terminus: UDP-arabinopyranose mutase 2 (360 aa).

V2 carries the post-translational modification N-acetylvaline. Residues 110-112 (DDD) carry the DXD motif motif. R158 carries N-linked (Glc...) arginine glycosylation.

It belongs to the RGP family. In terms of assembly, heteromers with RGP1, RGP4 and RGP5. Mn(2+) is required as a cofactor. Mg(2+) serves as cofactor. Reversibly glycosylated in vitro by UDP-glucose, UDP-xylose and UDP-galactose, but not UDP-mannose. Predominantly expressed in shoot and root apical meristems. Expressed in epidermal cells of leaves, inflorescence stems and seed coat. Expressed in pollen.

The protein localises to the cytoplasm. It localises to the cytosol. It is found in the golgi apparatus. It catalyses the reaction UDP-beta-L-arabinofuranose = UDP-beta-L-arabinopyranose. Functionally, UDP-L-arabinose mutase involved in the biosynthesis of cell wall non-cellulosic polysaccharides. Catalyzes the interconvertion of UDP-L-arabinopyranose (UDP-Arap) and UDP-L-arabinofuranose (UDP-Araf) in vitro. Preferentially catalyzes the formation of UDP-Arap from UDP-Araf. At thermodynamic equilibrium in vitro the ratio of the pyranose form over the furanose form is 95:5. Is not active on other UDP-sugars (UDP-Gal, UDP-Xyl, UDP-Glc, GDP-Man and GDP-Fuc). Functions redundantly with RGP2 and is essential for proper cell walls and pollen development. Probably involved in the formation of the pectocellulosic cell wall layer intine. Is probably active as heteromer in vivo. This is UDP-arabinopyranose mutase 2 from Arabidopsis thaliana (Mouse-ear cress).